Reading from the N-terminus, the 335-residue chain is Tetraacyldisaccharide 4'-kinase (335 aa).

58 to 65 (TVGGSGKT) provides a ligand contact to ATP.

It belongs to the LpxK family.

It carries out the reaction a lipid A disaccharide + ATP = a lipid IVA + ADP + H(+). It functions in the pathway glycolipid biosynthesis; lipid IV(A) biosynthesis; lipid IV(A) from (3R)-3-hydroxytetradecanoyl-[acyl-carrier-protein] and UDP-N-acetyl-alpha-D-glucosamine: step 6/6. Functionally, transfers the gamma-phosphate of ATP to the 4'-position of a tetraacyldisaccharide 1-phosphate intermediate (termed DS-1-P) to form tetraacyldisaccharide 1,4'-bis-phosphate (lipid IVA). The protein is Tetraacyldisaccharide 4'-kinase of Shewanella sp. (strain MR-7).